The chain runs to 200 residues: GTP cyclohydrolase-2 (200 aa).

Residue 50–54 (RVHSE) participates in GTP binding. The Zn(2+) site is built by Cys55, Cys66, and Cys68. Residues Gln71, 93–95 (EGR), and Thr115 each bind GTP. Catalysis depends on Asp127, which acts as the Proton acceptor. Arg129 (nucleophile) is an active-site residue. Positions 150 and 155 each coordinate GTP.

This sequence belongs to the GTP cyclohydrolase II family. Requires Zn(2+) as cofactor.

It carries out the reaction GTP + 4 H2O = 2,5-diamino-6-hydroxy-4-(5-phosphoribosylamino)-pyrimidine + formate + 2 phosphate + 3 H(+). It participates in cofactor biosynthesis; riboflavin biosynthesis; 5-amino-6-(D-ribitylamino)uracil from GTP: step 1/4. Functionally, catalyzes the conversion of GTP to 2,5-diamino-6-ribosylamino-4(3H)-pyrimidinone 5'-phosphate (DARP), formate and pyrophosphate. The polypeptide is GTP cyclohydrolase-2 (Acinetobacter baumannii (strain AB0057)).